Consider the following 63-residue polypeptide: Large ribosomal subunit protein bL28 (63 aa).

This sequence belongs to the bacterial ribosomal protein bL28 family.

The sequence is that of Large ribosomal subunit protein bL28 from Coprothermobacter proteolyticus (strain ATCC 35245 / DSM 5265 / OCM 4 / BT).